The following is a 319-amino-acid chain: mRNA decay activator protein ZFP36 (319 aa).

The interval 1–15 (MDLSAIYESLQSMSH) is necessary for nuclear export. The interval 1–92 (MDLSAIYESL…PTSPTATPTT (92 aa)) is necessary and sufficient for the association with mRNA decay enzymes and mRNA decay activation. 2 necessary for localization of ARE-containing mRNAs to processing bodies (PBs) regions span residues 1 to 166 (MDLS…DLAL) and 92 to 319 (TSSR…SVSE). Residue S52 is modified to Phosphoserine; by MAPKAPK2. The residue at position 58 (S58) is a Phosphoserine. The stretch at 63-67 (PPPPG) is one P-P-P-P-G repeat. Positions 65-84 (PPGFAPLAPRPGPELSPSPT) are enriched in pro residues. A disordered region spans residues 65–95 (PPGFAPLAPRPGPELSPSPTSPTATPTTSSR). Phosphoserine occurs at positions 80 and 82. A Phosphothreonine modification is found at T84. S85 is modified (phosphoserine). The segment covering 85-94 (SPTATPTTSS) has biased composition (low complexity). Residues 87–160 (TATPTTSSRY…GSRCHFIHNP (74 aa)) form a necessary for nuclear localization region. The necessary for RNA-binding stretch occupies residues 89–165 (TPTTSSRYKT…FIHNPTEDLA (77 aa)). 2 consecutive C3H1-type zinc fingers follow at residues 95-123 (RYKT…HGLG) and 133-161 (KYKT…HNPT). The tract at residues 95–186 (RYKTELCRTY…ISFSGLPSGR (92 aa)) is necessary for interaction with PABPN1. The tract at residues 166–319 (LPGQPHVLRQ…PIFNRISVSE (154 aa)) is necessary for mRNA decay activation. S178 carries the phosphoserine; by MAPKAPK2 modification. The span at 179-188 (FSGLPSGRRS) shows a compositional bias: low complexity. The segment at 179 to 309 (FSGLPSGRRS…PQTPAPPRRL (131 aa)) is disordered. S189 is subject to Phosphoserine. The P-P-P-P-G repeat unit spans residues 190-194 (PPPPG). Low complexity predominate over residues 196–208 (SGPSLSSCSFSPS). S210 is subject to Phosphoserine. The P-P-P-P-G repeat unit spans residues 211–215 (PPPPG). S220 carries the phosphoserine; by MAPK1; in vitro modification. At T250 the chain carries Phosphothreonine. Phosphoserine is present on residues S269, S289, and S316. The span at 279 to 289 (SSGSSLGGSDS) shows a compositional bias: low complexity. The interval 305 to 319 (PPRRLPIFNRISVSE) is interaction with CNOT1.

Associates with cytoplasmic CCR4-NOT and PAN2-PAN3 deadenylase complexes to trigger ARE-containing mRNA deadenylation and decay processes. Part of a mRNA decay activation complex at least composed of poly(A)-specific exoribonucleases CNOT6, EXOSC2 and XRN1 and mRNA-decapping enzymes DCP1A and DCP2. Associates with the RNA exosome complex. Interacts (via phosphorylated form) with 14-3-3 proteins; these interactions promote exclusion of ZFP36 from cytoplasmic stress granules in response to arsenite treatment in a MAPKAPK2-dependent manner and does not prevent CCR4-NOT deadenylase complex recruitment or ZFP36-induced ARE-containing mRNA deadenylation and decay processes. Interacts with 14-3-3 proteins; these interactions occur in response to rapamycin in an Akt-dependent manner. Interacts with AGO2 and AGO4. Interacts (via C-terminus) with CNOT1; this interaction occurs in a RNA-independent manner and induces mRNA deadenylation. Interacts (via N-terminus) with CNOT6. Interacts with CNOT6L. Interacts (via C-terminus) with CNOT7; this interaction occurs in a RNA-independent manner, induces mRNA deadenylation and is inhibited in a phosphorylation MAPKAPK2-dependent manner. Interacts (via unphosphorylated form) with CNOT8; this interaction occurs in a RNA-independent manner and is inhibited in a phosphorylation MAPKAPK2-dependent manner. Interacts with DCP1A. Interacts (via N-terminus) with DCP2. Interacts with EDC3. Interacts (via N-terminus) with EXOSC2. Interacts with heat shock 70 kDa proteins. Interacts with KHSRP; this interaction increases upon cytokine-induced treatment. Interacts with MAP3K4; this interaction enhances the association with SH3KBP1/CIN85. Interacts with MAPKAPK2; this interaction occurs upon skeletal muscle satellite cell activation. Interacts with NCL. Interacts with NUP214; this interaction increases upon lipopolysaccharide (LPS) stimulation. Interacts with PABPC1; this interaction occurs in a RNA-dependent manner. Interacts (via hypophosphorylated form) with PABPN1 (via RRM domain and C-terminal arginine-rich region); this interaction occurs in the nucleus in a RNA-independent manner, decreases in presence of single-stranded poly(A) RNA-oligomer and in a p38 MAPK-dependent-manner and inhibits nuclear poly(A) tail synthesis. Interacts with PAN2. Interacts (via C3H1-type zinc finger domains) with PKM. Interacts (via C3H1-type zinc finger domains) with nuclear RNA poly(A) polymerase. Interacts with PPP2CA; this interaction occurs in LPS-stimulated cells and induces ZFP36 dephosphorylation, and hence may promote ARE-containing mRNAs decay. Interacts (via C-terminus) with PRR5L (via C-terminus); this interaction may accelerate ZFP36-mediated mRNA decay during stress. Interacts (via C-terminus) with SFN; this interaction occurs in a phosphorylation-dependent manner. Interacts (via extreme C-terminal region) with SH3KBP1/CIN85 (via SH3 domains); this interaction enhances MAP3K4-induced phosphorylation of ZFP36 at Ser-58 and Ser-85 and does not alter neither ZFP36 binding to ARE-containing transcripts nor TNF-alpha mRNA decay. Interacts with XRN1. Interacts (via C-terminus and Ser-178 phosphorylated form) with YWHAB; this interaction occurs in a p38/MAPKAPK2-dependent manner, increases cytoplasmic localization of ZFP36 and protects ZFP36 from Ser-178 dephosphorylation by serine/threonine phosphatase 2A, and hence may be crucial for stabilizing ARE-containing mRNAs. Interacts (via phosphorylated form) with YWHAE. Interacts (via C-terminus) with YWHAG; this interaction occurs in a phosphorylation-dependent manner. Interacts with YWHAH; this interaction occurs in a phosphorylation-dependent manner. Interacts with YWHAQ; this interaction occurs in a phosphorylation-dependent manner. Interacts with (via C-terminus) YWHAZ; this interaction occurs in a phosphorylation-dependent manner. Does not interact with SH3KBP1. Interacts (via the 4EHP-binding motif) with EIF4E2; the interaction is direct. Interacts (via P-P-P-P-G repeats) with GIGYF2; the interaction is direct. Phosphorylated. Phosphorylation at serine and/or threonine residues occurs in a p38 MAPK- and MAPKAPK2-dependent manner. Phosphorylated by MAPKAPK2 at Ser-52 and Ser-178; phosphorylation increases its stability and cytoplasmic localization, promotes binding to 14-3-3 adapter proteins and inhibits the recruitment of cytoplasmic CCR4-NOT and PAN2-PAN3 deadenylase complexes to the mRNA decay machinery, thereby inhibiting ZFP36-induced ARE-containing mRNA deadenylation and decay processes. Phosphorylation by MAPKAPK2 does not impair ARE-containing RNA-binding. Phosphorylated in a MAPKAPK2- and p38 MAPK-dependent manner upon skeletal muscle satellite cell activation; this phosphorylation inhibits ZFP36-mediated mRNA decay activity, and hence stabilizes MYOD1 mRNA. Phosphorylated by MAPK1 upon mitogen stimulation. Phosphorylated at Ser-58 and Ser-85; these phosphorylations increase in a SH3KBP1-dependent manner. Phosphorylated at serine and threonine residues in a pyruvate kinase PKM- and p38 MAPK-dependent manner. Phosphorylation at Ser-52 may participate in the PKM-mediated degradation of ZFP36 in a p38 MAPK-dependent manner. Dephosphorylated by serine/threonine phosphatase 2A at Ser-178. Post-translationally, ubiquitinated; pyruvate kinase (PKM)-dependent ubiquitination leads to proteasomal degradation through a p38 MAPK signaling pathway. As to expression, expressed in skeletal muscle satellite cells. Strongly expressed in differentiated adipocytes compared to preadipocytes (at protein level). Expressed in embryonic stem cells (ESCs). Expressed in heart, placenta, kidney, intestine, liver, lung, thymus, fat and spleen.

Its subcellular location is the nucleus. It is found in the cytoplasm. The protein resides in the cytoplasmic granule. It localises to the P-body. In terms of biological role, zinc-finger RNA-binding protein that destabilizes numerous cytoplasmic AU-rich element (ARE)-containing mRNA transcripts by promoting their poly(A) tail removal or deadenylation, and hence provide a mechanism for attenuating protein synthesis. Acts as an 3'-untranslated region (UTR) ARE mRNA-binding adapter protein to communicate signaling events to the mRNA decay machinery. Recruits deadenylase CNOT7 (and probably the CCR4-NOT complex) via association with CNOT1, and hence promotes ARE-mediated mRNA deadenylation. Also functions by recruiting components of the cytoplasmic RNA decay machinery to the bound ARE-containing mRNAs. Self-regulates by destabilizing its own mRNA. Binds to 3'-UTR ARE of numerous mRNAs and of its own mRNA. Plays a role in anti-inflammatory responses; suppresses tumor necrosis factor (TNF)-alpha production by stimulating ARE-mediated TNF-alpha mRNA decay and several other inflammatory ARE-containing mRNAs in interferon (IFN)- and/or lipopolysaccharide (LPS)-induced macrophages. Also plays a role in the regulation of dendritic cell maturation at the post-transcriptional level, and hence operates as part of a negative feedback loop to limit the inflammatory response. Promotes ARE-mediated mRNA decay of hypoxia-inducible factor HIF1A mRNA during the response of endothelial cells to hypoxia. Positively regulates early adipogenesis of preadipocytes by promoting ARE-mediated mRNA decay of immediate early genes (IEGs). Negatively regulates hematopoietic/erythroid cell differentiation by promoting ARE-mediated mRNA decay of the transcription factor STAT5B mRNA. Plays a role in maintaining skeletal muscle satellite cell quiescence by promoting ARE-mediated mRNA decay of the myogenic determination factor MYOD1 mRNA. Also associates with and regulates the expression of non-ARE-containing target mRNAs at the post-transcriptional level, such as MHC class I mRNAs. Participates in association with argonaute RISC catalytic components in the ARE-mediated mRNA decay mechanism; assists microRNA (miRNA) targeting ARE-containing mRNAs. May also play a role in the regulation of cytoplasmic mRNA decapping; enhances decapping of ARE-containing RNAs, in vitro. Involved in the delivery of target ARE-mRNAs to processing bodies (PBs). In addition to its cytosolic mRNA-decay function, affects nuclear pre-mRNA processing. Negatively regulates nuclear poly(A)-binding protein PABPN1-stimulated polyadenylation activity on ARE-containing pre-mRNA during LPS-stimulated macrophages. Also involved in the regulation of stress granule (SG) and P-body (PB) formation and fusion. Plays a role in the regulation of keratinocyte proliferation, differentiation and apoptosis. Plays a role as a tumor suppressor by inhibiting cell proliferation in breast cancer cells. The protein is mRNA decay activator protein ZFP36 of Mus musculus (Mouse).